Reading from the N-terminus, the 160-residue chain is uncharacterized protein (160 aa).

A helical transmembrane segment spans residues 27 to 47 (VMNSYFIAGCGPAVCYYAVSW).

The protein localises to the membrane. This is an uncharacterized protein from Homo sapiens (Human).